The chain runs to 319 residues: Carboxylesterase NlhH (319 aa).

Residues 88 to 90 (HGG) carry the Involved in the stabilization of the negatively charged intermediate by the formation of the oxyanion hole motif. Residues Ser-162, Asp-260, and His-290 contribute to the active site.

This sequence belongs to the 'GDXG' lipolytic enzyme family. Monomer.

The enzyme catalyses a carboxylic ester + H2O = an alcohol + a carboxylate + H(+). Hydrolyzes various short-chain esters. The sequence is that of Carboxylesterase NlhH (nlhH) from Mycobacterium tuberculosis (strain CDC 1551 / Oshkosh).